Consider the following 498-residue polypeptide: ATP synthase subunit beta, chloroplastic (498 aa).

ATP is bound at residue 172-179 (GGAGVGKT).

This sequence belongs to the ATPase alpha/beta chains family. As to quaternary structure, F-type ATPases have 2 components, CF(1) - the catalytic core - and CF(0) - the membrane proton channel. CF(1) has five subunits: alpha(3), beta(3), gamma(1), delta(1), epsilon(1). CF(0) has four main subunits: a(1), b(1), b'(1) and c(9-12).

The protein localises to the plastid. The protein resides in the chloroplast thylakoid membrane. It catalyses the reaction ATP + H2O + 4 H(+)(in) = ADP + phosphate + 5 H(+)(out). In terms of biological role, produces ATP from ADP in the presence of a proton gradient across the membrane. The catalytic sites are hosted primarily by the beta subunits. The polypeptide is ATP synthase subunit beta, chloroplastic (Phalaenopsis aphrodite subsp. formosana (Moth orchid)).